Reading from the N-terminus, the 261-residue chain is DNA repair protein RecO (261 aa).

The protein belongs to the RecO family.

Its function is as follows. Involved in DNA repair and RecF pathway recombination. The polypeptide is DNA repair protein RecO (Mycobacteroides abscessus (strain ATCC 19977 / DSM 44196 / CCUG 20993 / CIP 104536 / JCM 13569 / NCTC 13031 / TMC 1543 / L948) (Mycobacterium abscessus)).